An 841-amino-acid chain; its full sequence is Microcephalin (841 aa).

Residues 1–93 (MAAPILKDVV…AHIDESLFPA (93 aa)) form the BRCT 1 domain. Phosphoserine occurs at positions 278, 286, 295, and 332. Phosphothreonine is present on T334. Disordered stretches follow at residues 340-375 (GHLLIHSRPRSSSVKRKRVSYGFHSPPKEKCKRKRS), 417-445 (PDNLKERNSENLPPESQLPSSPAQFSCRS), 481-507 (SSPQKTANGEGRATLSGVTSEESSAPE), and 562-593 (VGLKSTQDKGTTSKISNSSEGEASSEHEPRSV). Basic residues predominate over residues 342–358 (LLIHSRPRSSSVKRKRV). The span at 433 to 445 (QLPSSPAQFSCRS) shows a compositional bias: polar residues. A compositionally biased stretch (polar residues) spans 565–583 (KSTQDKGTTSKISNSSEGE). BRCT domains follow at residues 646 to 736 (SGKG…SFEL) and 757 to 839 (YRGT…NYLL).

Interacts with CDC27 and maybe other components of the APC/C complex. Interacts with histone variant H2AX under DNA damage conditions.

It localises to the cytoplasm. The protein localises to the cytoskeleton. Its subcellular location is the microtubule organizing center. The protein resides in the centrosome. Implicated in chromosome condensation and DNA damage induced cellular responses. May play a role in neurogenesis and regulation of the size of the cerebral cortex. The polypeptide is Microcephalin (Colobus guereza (Mantled guereza)).